Reading from the N-terminus, the 2466-residue chain is Highly reducing polyketide synthase apmlA (2466 aa).

Residues 1–57 form a disordered region; that stretch reads MSDHNHTNGTTNGNGIGSNGVQSHVPNGAHINGTSSGLKPNGISNGTTNGINGHAPS. Positions 41-53 are enriched in low complexity; that stretch reads NGISNGTTNGING. The Ketosynthase family 3 (KS3) domain maps to 62–491; sequence QTPVAVVGLA…GTNAHVVLEA (430 aa). Active-site for beta-ketoacyl synthase activity residues include Cys-235, His-372, and His-412. The tract at residues 608 to 921 is malonyl-CoA:ACP transacylase (MAT) domain; the sequence is IFTGQGAQWS…QYVAAAKRGA (314 aa). Residue Ser-700 is the For malonyltransferase activity of the active site. Residues 988 to 1124 are N-terminal hotdog fold; sequence HDLLGSKILS…GLVRIDEEAF (137 aa). The interval 988–1297 is dehydratase (DH) domain; it reads HDLLGSKILS…RFDPISSRGD (310 aa). Residues 988–1298 enclose the PKS/mFAS DH domain; it reads HDLLGSKILS…FDPISSRGDQ (311 aa). The active-site Proton acceptor; for dehydratase activity is the His-1020. The interval 1137 to 1298 is C-terminal hotdog fold; it reads AHPEPGAVGY…FDPISSRGDQ (162 aa). The active-site Proton donor; for dehydratase activity is the Asp-1202. An enoyl reductase (ER) domain region spans residues 1737 to 2061; the sequence is GTIDSLHYAE…STKHMGKLVL (325 aa). A ketoreductase (KR) domain region spans residues 2087 to 2264; sequence TYLLVGGLKG…STVNLGIIEQ (178 aa). The 81-residue stretch at 2382–2462 folds into the Carrier domain; sequence ANLPQVVDAT…FLAEKIITKV (81 aa). Residue Ser-2422 is modified to O-(pantetheine 4'-phosphoryl)serine.

It depends on pantetheine 4'-phosphate as a cofactor.

The protein operates within secondary metabolite biosynthesis. Highly reducing polyketide synthase (HR-PKS); part of the gene cluster that mediates the biosynthesis of phaeospelide A, a fungal polyene macrolide with a 34-membered macrolactone ring and an all-trans conjugated hexaene structure. The HR-PKS ApmlA uses acetyl-CoA and malonyl-CoA as its starter and extender units, respectively, and provides the large carbon framework in phaeospelide via 16 cycles of polyketide chain elongation, which is the largest number identified in fungal iterative PKSs thus far. During round 1, the KR domain reduces beta-ketone to an L-oriented hydroxy group, while during later rounds, it provides hydroxy groups in the D-configuration. The characteristic conjugated hexaene moiety is built during the later rounds (10-15), when the KR and DH domains are at work but ER is off. Phylogenetic analysis of the DH domain suggests that a polyene formation is programmed in the DH domain. Finally, the mature ACP-tethered carbon chain is transferred to the serine residue of the thiohydrolase apmlB, followed by intramolecular macrolactonization, generating phaeospelide A. When one elongation cycle during rounds 7-9 is skipped, phaeospelide B is biosynthesized instead. The chain is Highly reducing polyketide synthase apmlA from Arthrinium phaeospermum (Gymnosporium phaeospermum).